Consider the following 561-residue polypeptide: uncharacterized protein (561 aa).

A coiled-coil region spans residues Asp-187–Ile-217.

This is an uncharacterized protein from Dictyostelium discoideum (Social amoeba).